A 132-amino-acid chain; its full sequence is UPF0332 protein TM_1000 (132 aa).

It belongs to the UPF0332 family.

The chain is UPF0332 protein TM_1000 from Thermotoga maritima (strain ATCC 43589 / DSM 3109 / JCM 10099 / NBRC 100826 / MSB8).